The primary structure comprises 236 residues: 2-C-methyl-D-erythritol 4-phosphate cytidylyltransferase (236 aa).

The protein belongs to the IspD/TarI cytidylyltransferase family. IspD subfamily. Homodimer.

It carries out the reaction 2-C-methyl-D-erythritol 4-phosphate + CTP + H(+) = 4-CDP-2-C-methyl-D-erythritol + diphosphate. The protein operates within isoprenoid biosynthesis; isopentenyl diphosphate biosynthesis via DXP pathway; isopentenyl diphosphate from 1-deoxy-D-xylulose 5-phosphate: step 2/6. Its function is as follows. Catalyzes the formation of 4-diphosphocytidyl-2-C-methyl-D-erythritol from CTP and 2-C-methyl-D-erythritol 4-phosphate (MEP). The sequence is that of 2-C-methyl-D-erythritol 4-phosphate cytidylyltransferase from Salmonella schwarzengrund (strain CVM19633).